Reading from the N-terminus, the 101-residue chain is Ascorbate-specific PTS system EIIB component (101 aa).

The 94-residue stretch at 3-96 folds into the PTS EIIB type-2 domain; it reads VRILAVCGNG…KLLEVIKEHF (94 aa). Cys-9 serves as the catalytic Phosphocysteine intermediate. Cys-9 carries the phosphocysteine modification.

Its subcellular location is the cytoplasm. It carries out the reaction N(pros)-phospho-L-histidyl-[protein] + L-ascorbate(out) = L-ascorbate 6-phosphate(in) + L-histidyl-[protein]. In terms of biological role, the phosphoenolpyruvate-dependent sugar phosphotransferase system (sugar PTS), a major carbohydrate active transport system, catalyzes the phosphorylation of incoming sugar substrates concomitantly with their translocation across the cell membrane. The enzyme II UlaABC PTS system is involved in ascorbate transport. This Salmonella choleraesuis (strain SC-B67) protein is Ascorbate-specific PTS system EIIB component (ulaB).